The chain runs to 817 residues: Sorting nexin-29 (817 aa).

One can recognise an RUN domain in the interval 37–181; the sequence is SDSDSRVTCL…ILFAINIDNK (145 aa). A phosphoserine mark is found at S269, S292, S293, S331, and S345. The disordered stretch occupies residues 271–299; it reads DDEEDEQSSGDVFKKIPGAGESSEENSDR. 2 disordered regions span residues 344–381 and 417–460; these read KSID…LDAG and APLG…LPSA. Acidic residues predominate over residues 347–358; it reads DDEDADENEDDV. Residues 369-378 are compositionally biased toward basic and acidic residues; it reads GHSESPEKPL. Residues 445–460 show a composition bias toward low complexity; that stretch reads SPPGQESPLSSLLPSA. The residue at position 451 (S451) is a Phosphoserine. A coiled-coil region spans residues 466–546; it reads MTVSDLRQAI…VLKVQLKKYV (81 aa). A Phosphoserine modification is found at S641. T643 bears the Phosphothreonine mark. Residues S644 and S648 each carry the phosphoserine modification. The PX domain maps to 658–781; it reads ALINVWIPSV…PFFVDITPPG (124 aa). The interval 784-817 is disordered; it reads LTKNSRPKVASRFPKLARGHPRETRNVEPQSGDL.

The protein belongs to the sorting nexin family.

The protein is Sorting nexin-29 (SNX29) of Bos taurus (Bovine).